An 88-amino-acid chain; its full sequence is Molybdopterin synthase sulfur carrier subunit (88 aa).

At Gly88 the chain carries 1-thioglycine; alternate. A Glycyl adenylate; alternate modification is found at Gly88.

The protein belongs to the MoaD family. MOCS2A subfamily. Heterotetramer; composed of 2 small (MOCS2A) and 2 large (MOCS2B) subunits. C-terminal thiocarboxylation occurs in 2 steps, it is first acyl-adenylated (-COAMP) via the hesA/moeB/thiF part of MOCS3, then thiocarboxylated (-COSH) via the rhodanese domain of MOCS3.

It localises to the cytoplasm. It is found in the cytosol. It functions in the pathway cofactor biosynthesis; molybdopterin biosynthesis. Acts as a sulfur carrier required for molybdopterin biosynthesis. Component of the molybdopterin synthase complex that catalyzes the conversion of precursor Z into molybdopterin by mediating the incorporation of 2 sulfur atoms into precursor Z to generate a dithiolene group. In the complex, serves as sulfur donor by being thiocarboxylated (-COSH) at its C-terminus by MOCS3. After interaction with MOCS2B, the sulfur is then transferred to precursor Z to form molybdopterin. The sequence is that of Molybdopterin synthase sulfur carrier subunit from Mus musculus (Mouse).